The chain runs to 433 residues: Oxaloacetate decarboxylase beta chain 2 (433 aa).

9 consecutive transmembrane segments (helical) span residues 13–35 (LMHLGAGQAIMLLVSLLLLWLAI), 42–64 (LLLLPIGFGGLLSNIPEAGLALT), 125–147 (LFYKVAIGSGVAPLVIFMGVGAM), 160–182 (LLLGAAAQFGIFATVLGALTLNY), 214–236 (LAPELLGAIAVAAYSYMALVPLI), 266–288 (ILFPVVLLMLVALLLPDAAPLLG), 308–327 (TVQNGLINIVTIFLGLSVGA), 339–361 (TLGILLLGVIAFGIGTAAGVLMA), and 413–432 (VAGVIGSAIAAGVMLKYVLA).

Belongs to the GcdB/MmdB/OadB family. In terms of assembly, heterotrimer of an alpha, a beta and a gamma subunit. It depends on Na(+) as a cofactor.

It is found in the cell membrane. It carries out the reaction oxaloacetate + 2 Na(+)(in) + H(+) = pyruvate + 2 Na(+)(out) + CO2. In terms of biological role, catalyzes the decarboxylation of oxaloacetate coupled to Na(+) translocation. This chain is Oxaloacetate decarboxylase beta chain 2 (oadB2), found in Salmonella typhimurium (strain LT2 / SGSC1412 / ATCC 700720).